The primary structure comprises 283 residues: Pantothenate synthetase (283 aa).

Position 26–33 (methionine 26–histidine 33) interacts with ATP. The active-site Proton donor is histidine 33. Glutamine 57 contacts (R)-pantoate. Glutamine 57 is a binding site for beta-alanine. ATP is bound at residue glycine 144 to aspartate 147. Glutamine 150 contacts (R)-pantoate. ATP contacts are provided by residues isoleucine 173 and leucine 181 to arginine 184.

The protein belongs to the pantothenate synthetase family. As to quaternary structure, homodimer.

The protein resides in the cytoplasm. The enzyme catalyses (R)-pantoate + beta-alanine + ATP = (R)-pantothenate + AMP + diphosphate + H(+). It functions in the pathway cofactor biosynthesis; (R)-pantothenate biosynthesis; (R)-pantothenate from (R)-pantoate and beta-alanine: step 1/1. Catalyzes the condensation of pantoate with beta-alanine in an ATP-dependent reaction via a pantoyl-adenylate intermediate. This is Pantothenate synthetase from Polynucleobacter necessarius subsp. necessarius (strain STIR1).